Reading from the N-terminus, the 294-residue chain is Nucleoside-specific channel-forming protein Tsx (294 aa).

Residues 1-22 (MKKTLLAAGAVVALSTTFAAGA) form the signal peptide.

It belongs to the nucleoside-specific channel-forming outer membrane porin (Tsx) (TC 1.B.10) family.

The protein resides in the cell outer membrane. Functionally, functions as a substrate-specific channel for nucleosides and deoxynucleosides. Also functions in albicidin uptake and as receptor for colicin K. Also is a receptor for several Tsx-specific bacteriophages. The protein is Nucleoside-specific channel-forming protein Tsx of Klebsiella pneumoniae.